Consider the following 577-residue polypeptide: DNA primase (577 aa).

The segment at 40–64 (CPFHHDKTPSFTVSNEKQFYYCFGC) adopts a CHC2-type zinc-finger fold. The region spanning 255 to 337 (VYLLVVEGYI…KKTLKFILLP (83 aa)) is the Toprim domain. Positions 261, 305, and 307 each coordinate Mg(2+).

This sequence belongs to the DnaG primase family. Monomer. Interacts with DnaB. Zn(2+) is required as a cofactor. The cofactor is Mg(2+).

The catalysed reaction is ssDNA + n NTP = ssDNA/pppN(pN)n-1 hybrid + (n-1) diphosphate.. RNA polymerase that catalyzes the synthesis of short RNA molecules used as primers for DNA polymerase during DNA replication. This Buchnera aphidicola subsp. Acyrthosiphon pisum (strain APS) (Acyrthosiphon pisum symbiotic bacterium) protein is DNA primase.